The chain runs to 206 residues: LexA repressor (206 aa).

The segment at residues 28-48 is a DNA-binding region (H-T-H motif); it reads RAEIARRLGFKSANAAEEHLK. Catalysis depends on for autocatalytic cleavage activity residues serine 123 and lysine 160.

Belongs to the peptidase S24 family. Homodimer.

It carries out the reaction Hydrolysis of Ala-|-Gly bond in repressor LexA.. Functionally, represses a number of genes involved in the response to DNA damage (SOS response), including recA and lexA. In the presence of single-stranded DNA, RecA interacts with LexA causing an autocatalytic cleavage which disrupts the DNA-binding part of LexA, leading to derepression of the SOS regulon and eventually DNA repair. The protein is LexA repressor of Shewanella piezotolerans (strain WP3 / JCM 13877).